The primary structure comprises 920 residues: Disintegrin and metalloproteinase domain-containing protein 19 (920 aa).

An N-terminal signal peptide occupies residues 1 to 26 (MPGRAGVARFCLLALALQLHWPLAAC). Residues 27–204 (EPGWTTRGSQ…TKKQPRRMKR (178 aa)) constitute a propeptide that is removed on maturation. The Extracellular portion of the chain corresponds to 27 to 703 (EPGWTTRGSQ…VDSGPLPPKS (677 aa)). The Cysteine switch signature appears at 131 to 138 (STCRGIRG). C133 is a binding site for Zn(2+). N145 carries N-linked (GlcNAc...) asparagine glycosylation. One can recognise a Peptidase M12B domain in the interval 211–409 (KYVELYLVAD…GGGMCLSNMP (199 aa)). Intrachain disulfides connect C321-C404, C361-C388, and C362-C371. H346 is a binding site for Zn(2+). E347 is a catalytic residue. Zn(2+) contacts are provided by H350 and H356. Positions 417–503 (GRRCGNGYLE…HCPTNYYQMD (87 aa)) constitute a Disintegrin domain. N-linked (GlcNAc...) asparagine glycosylation is found at N445 and N448. A disulfide bond links C475 and C495. N-linked (GlcNAc...) asparagine glycosylation is present at N649. The EGF-like domain occupies 654 to 686 (ETEGCGKKCNGHGVCNNNKNCHCFPGWSPPFCN). Cystine bridges form between C658–C668, C662–C674, and C676–C685. Residues 704-724 (VGPVIAGVFSALFVLAVLVLL) traverse the membrane as a helical segment. The Cytoplasmic segment spans residues 725–920 (CHCYRQSHKL…RVGAIISSKI (196 aa)). A disordered region spans residues 755-920 (SQSGGTGHAN…RVGAIISSKI (166 aa)). Residues 767-783 (FKLQTPQGKRKVTNTPE) are compositionally biased toward polar residues. Basic and acidic residues predominate over residues 825–834 (ARIERKESAR). The short motif at 835-846 (RPPPSRPMPPAP) is the SH3-binding element. Composition is skewed to pro residues over residues 835-846 (RPPPSRPMPPAP) and 888-903 (TSGP…PVPK).

In terms of assembly, interacts with SH3PXD2A. It depends on Zn(2+) as a cofactor. Post-translationally, the precursor is cleaved by a furin endopeptidase. In terms of tissue distribution, widely expressed, with the highest expression in bone, heart and lung, followed by brain and spleen and relatively low expression in liver, skeletal muscle, kidney and testis. In bone, primarily expressed in cell of the osteoblast lineage and not detected in mature osteoclasts.

The protein localises to the membrane. Its function is as follows. Participates in the proteolytic processing of beta-type neuregulin isoforms which are involved in neurogenesis and synaptogenesis, suggesting a regulatory role in glial cell. Also cleaves alpha-2 macroglobulin. May be involved in osteoblast differentiation and/or osteoblast activity in bone. The chain is Disintegrin and metalloproteinase domain-containing protein 19 (Adam19) from Mus musculus (Mouse).